The sequence spans 169 residues: Ubiquitin-conjugating enzyme E2 2 (169 aa).

Residues 4 to 150 (AAKRRLIRDF…VKKTVELSWV (147 aa)) enclose the UBC core domain. Residue C88 is the Glycyl thioester intermediate of the active site.

It belongs to the ubiquitin-conjugating enzyme family.

It is found in the cytoplasm. The protein localises to the nucleus. It carries out the reaction S-ubiquitinyl-[E1 ubiquitin-activating enzyme]-L-cysteine + [E2 ubiquitin-conjugating enzyme]-L-cysteine = [E1 ubiquitin-activating enzyme]-L-cysteine + S-ubiquitinyl-[E2 ubiquitin-conjugating enzyme]-L-cysteine.. Its pathway is protein modification; protein ubiquitination. In terms of biological role, catalyzes the covalent attachment of ubiquitin to other proteins. Plays a role in transcription regulation by catalyzing the monoubiquitination of histone H2B to form H2BK123ub1. H2BK123ub1 gives a specific tag for epigenetic transcriptional activation and is also a prerequisite for H3K4me and H3K79me formation. Also involved in postreplication repair of UV-damaged DNA, in N-end rule-dependent protein degradation and in sporulation. In Cryptococcus neoformans var. neoformans serotype D (strain B-3501A) (Filobasidiella neoformans), this protein is Ubiquitin-conjugating enzyme E2 2 (UBC2).